A 733-amino-acid chain; its full sequence is Serine/threonine-protein kinase ATG1c (733 aa).

The Protein kinase domain occupies 12–269 (YLVGRQIGSG…FEEFFNHPFL (258 aa)). ATP-binding positions include 18–26 (IGSGSFSVV) and K41. The Proton acceptor role is filled by D134. Disordered stretches follow at residues 292 to 363 (SSGS…ELTS) and 379 to 414 (FETQ…SQDS). A compositionally biased stretch (polar residues) spans 329-339 (KKTSSMKSSSG). Basic and acidic residues-rich tracts occupy residues 342 to 360 (VDTR…KHTE) and 379 to 393 (FETQ…RREP). The short motif at 419-422 (FVLV) is the AIM (Atg8-family-interacting motif) element. Disordered regions lie at residues 565 to 596 (GSPS…SHDG) and 713 to 733 (HRRS…NRQS). The segment covering 566-577 (SPSQDINKLRSS) has biased composition (polar residues). A compositionally biased stretch (basic and acidic residues) spans 579 to 596 (LKHDTHSSNKVTDLSHDG). Over residues 717-733 (SAGQMQGSSLAMMNRQS) the composition is skewed to polar residues.

This sequence belongs to the protein kinase superfamily. Ser/Thr protein kinase family.

Its subcellular location is the cytoplasmic vesicle. It is found in the autophagosome. In terms of biological role, serine/threonine protein kinase involved in autophagy. The ATG1-ATG13 protein kinase complex regulates downstream events required for autophagosome enclosure and/or vacuolar delivery. The chain is Serine/threonine-protein kinase ATG1c from Arabidopsis thaliana (Mouse-ear cress).